The chain runs to 316 residues: Thymidylate synthase (316 aa).

DUMP-binding positions include R23 and 178–179 (RR). Catalysis depends on C198, which acts as the Nucleophile. DUMP-binding positions include 218–221 (RSGD), N229, and 259–261 (HIY). D221 provides a ligand contact to (6R)-5,10-methylene-5,6,7,8-tetrahydrofolate. Residue A315 coordinates (6R)-5,10-methylene-5,6,7,8-tetrahydrofolate.

It belongs to the thymidylate synthase family. Bacterial-type ThyA subfamily. In terms of assembly, homodimer.

It is found in the cytoplasm. It carries out the reaction dUMP + (6R)-5,10-methylene-5,6,7,8-tetrahydrofolate = 7,8-dihydrofolate + dTMP. The protein operates within pyrimidine metabolism; dTTP biosynthesis. Catalyzes the reductive methylation of 2'-deoxyuridine-5'-monophosphate (dUMP) to 2'-deoxythymidine-5'-monophosphate (dTMP) while utilizing 5,10-methylenetetrahydrofolate (mTHF) as the methyl donor and reductant in the reaction, yielding dihydrofolate (DHF) as a by-product. This enzymatic reaction provides an intracellular de novo source of dTMP, an essential precursor for DNA biosynthesis. The polypeptide is Thymidylate synthase (Lactiplantibacillus plantarum (strain ATCC BAA-793 / NCIMB 8826 / WCFS1) (Lactobacillus plantarum)).